The primary structure comprises 306 residues: Bacitracin transport ATP-binding protein BcrA (306 aa).

One can recognise an ABC transporter domain in the interval 5 to 233 (IKTTDLTKMY…NRKYLEFQLS (229 aa)). An ATP-binding site is contributed by 37–44 (GRNGAGKT).

It belongs to the ABC transporter superfamily.

Its function is as follows. Part of the binding-protein-dependent transport system for bacitracin that confer resistance to this antibiotic. Probably responsible for energy coupling to the transport system. The sequence is that of Bacitracin transport ATP-binding protein BcrA (bcrA) from Bacillus licheniformis.